The primary structure comprises 272 residues: Protein alcS (272 aa).

A compositionally biased stretch (polar residues) spans Met1 to Thr14. Positions Met1–Ala21 are disordered. Transmembrane regions (helical) follow at residues Pro63–Trp83, Ile91–Leu111, Val122–Ala144, Phe164–Ala184, Val192–Trp212, and Leu225–Val245.

The protein belongs to the acetate uptake transporter (AceTr) (TC 2.A.96) family.

The protein localises to the cell membrane. It is found in the cell septum. The polypeptide is Protein alcS (Aspergillus fumigatus (strain CBS 144.89 / FGSC A1163 / CEA10) (Neosartorya fumigata)).